Consider the following 233-residue polypeptide: Type II methyltransferase M.MunI (233 aa).

It belongs to the MT-A70-like family.

It catalyses the reaction a 2'-deoxyadenosine in DNA + S-adenosyl-L-methionine = an N(6)-methyl-2'-deoxyadenosine in DNA + S-adenosyl-L-homocysteine + H(+). Its function is as follows. A methylase that recognizes the double-stranded sequence 5'-CAATTG-3', methylates A-3 on both strands, and protects the DNA from cleavage by the MunI endonuclease. The sequence is that of Type II methyltransferase M.MunI from Mycoplasma sp.